The following is a 261-amino-acid chain: Glutamate racemase (261 aa).

Residues 7-8 and 39-40 each bind substrate; these read DS and YG. The active-site Proton donor/acceptor is the C71. 72-73 is a substrate binding site; the sequence is NT. Residue C184 is the Proton donor/acceptor of the active site. Residue 185-186 participates in substrate binding; that stretch reads TH.

It belongs to the aspartate/glutamate racemases family.

The catalysed reaction is L-glutamate = D-glutamate. The protein operates within cell wall biogenesis; peptidoglycan biosynthesis. Its function is as follows. Provides the (R)-glutamate required for cell wall biosynthesis. This is Glutamate racemase from Aliarcobacter butzleri (strain RM4018) (Arcobacter butzleri).